Reading from the N-terminus, the 202-residue chain is MRTFIIKANEAHTRPDFKLNDLPGTSGRIDVLCRFLNSAFLLSHGFRKNVRVWLLLYGPPEPPKAIRFEGSRLKVRLNPDERSTARLIVKALKAGGGLREPGKEVEVYPGLYVSNRTFEDVVRLTLKNSAIYYLHEEGRPITDIRFPQNVAFVLGDHKGLSPEDEAFLDGIAERVSVGRKSYLASHVVAYINIFLDSLPNPP.

Positions 134 and 155 each coordinate S-adenosyl-L-methionine.

The protein belongs to the methyltransferase superfamily. TrmY family. In terms of assembly, homodimer.

The protein localises to the cytoplasm. The enzyme catalyses pseudouridine(54) in tRNA + S-adenosyl-L-methionine = N(1)-methylpseudouridine(54) in tRNA + S-adenosyl-L-homocysteine + H(+). Functionally, specifically catalyzes the N1-methylation of pseudouridine at position 54 (Psi54) in tRNAs. The protein is tRNA (pseudouridine(54)-N(1))-methyltransferase of Thermococcus gammatolerans (strain DSM 15229 / JCM 11827 / EJ3).